The chain runs to 96 residues: Protein RnfH (96 aa).

Belongs to the UPF0125 (RnfH) family.

This Pectobacterium carotovorum subsp. carotovorum (strain PC1) protein is Protein RnfH.